The following is a 619-amino-acid chain: 1-deoxy-D-xylulose-5-phosphate synthase (619 aa).

Thiamine diphosphate-binding positions include His74 and 115 to 117; that span reads GHS. Position 146 (Asp146) interacts with Mg(2+). Residues 147–148, Asn175, Tyr285, and Glu365 contribute to the thiamine diphosphate site; that span reads GA. Asn175 is a Mg(2+) binding site.

The protein belongs to the transketolase family. DXPS subfamily. In terms of assembly, homodimer. The cofactor is Mg(2+). Requires thiamine diphosphate as cofactor.

It carries out the reaction D-glyceraldehyde 3-phosphate + pyruvate + H(+) = 1-deoxy-D-xylulose 5-phosphate + CO2. It functions in the pathway metabolic intermediate biosynthesis; 1-deoxy-D-xylulose 5-phosphate biosynthesis; 1-deoxy-D-xylulose 5-phosphate from D-glyceraldehyde 3-phosphate and pyruvate: step 1/1. In terms of biological role, catalyzes the acyloin condensation reaction between C atoms 2 and 3 of pyruvate and glyceraldehyde 3-phosphate to yield 1-deoxy-D-xylulose-5-phosphate (DXP). The chain is 1-deoxy-D-xylulose-5-phosphate synthase from Clostridium perfringens (strain ATCC 13124 / DSM 756 / JCM 1290 / NCIMB 6125 / NCTC 8237 / Type A).